We begin with the raw amino-acid sequence, 299 residues long: Coenzyme PQQ synthesis protein B (299 aa).

It belongs to the PqqB family.

Its pathway is cofactor biosynthesis; pyrroloquinoline quinone biosynthesis. May be involved in the transport of PQQ or its precursor to the periplasm. This chain is Coenzyme PQQ synthesis protein B, found in Methylobacterium sp. (strain 4-46).